Here is a 229-residue protein sequence, read N- to C-terminus: Stage III sporulation protein AG (229 aa).

A helical transmembrane segment spans residues 30-50 (YHYFLFVFVLGVSFMLVSQLF). Disordered stretches follow at residues 64 to 93 (AVSSQHSADSKEKTAEVFKASKSDKPKDSI) and 136 to 159 (SNKNTTTEETDKEGGKRSVTDQSS). A compositionally biased stretch (basic and acidic residues) spans 71–93 (ADSKEKTAEVFKASKSDKPKDSI).

It localises to the cell membrane. The protein is Stage III sporulation protein AG (spoIIIAG) of Bacillus subtilis (strain 168).